The chain runs to 267 residues: MSHIGVAFDKARAEGRAVLVGCMPAGFPTVEGSIAAMTAMVEAGVDVIEVEIPYSDPVMDGPVIQRASDIALAGGVRVADTLRIIEAVAATGVPVVTMTYWNPVEQYGVDAFARDLAAAGGTGLITPDLIPDEAQEWLAASDAHGLDRTFLVAPSSTDTRLEMTVEHCRGFVYATALMGVTGARTQASAAAPVLVSRVRGVTDLPVGVGLGTGTGAQASTVAGFADGVIVGSALIRCLLDAPSLPAGLTALRALSAELAAGVRTPAH.

Active-site proton acceptor residues include Glu-49 and Asp-60.

This sequence belongs to the TrpA family. Tetramer of two alpha and two beta chains.

The enzyme catalyses (1S,2R)-1-C-(indol-3-yl)glycerol 3-phosphate + L-serine = D-glyceraldehyde 3-phosphate + L-tryptophan + H2O. Its pathway is amino-acid biosynthesis; L-tryptophan biosynthesis; L-tryptophan from chorismate: step 5/5. In terms of biological role, the alpha subunit is responsible for the aldol cleavage of indoleglycerol phosphate to indole and glyceraldehyde 3-phosphate. In Salinispora arenicola (strain CNS-205), this protein is Tryptophan synthase alpha chain.